The chain runs to 412 residues: Maltoporin (412 aa).

The first 22 residues, 1 to 22 (MKKVSVIAAAVAATLAAGSAFA), serve as a signal peptide directing secretion.

The protein belongs to the porin LamB (TC 1.B.3) family. Homotrimer formed of three 18-stranded antiparallel beta-barrels, containing three independent channels.

The protein resides in the cell outer membrane. The catalysed reaction is beta-maltose(in) = beta-maltose(out). In terms of biological role, involved in the transport of maltose and maltodextrins. The polypeptide is Maltoporin (Vibrio cholerae serotype O1 (strain ATCC 39315 / El Tor Inaba N16961)).